A 712-amino-acid chain; its full sequence is Phosphatase and actin regulator 4 (712 aa).

2 disordered regions span residues 1 to 22 (MGQA…GQPT) and 90 to 405 (RGLL…EVPK). Residues 72–97 (EVLERKISMRKPREELVKRGLLLEDS) form an RPEL 1 repeat. The span at 114–124 (NGHTTLIGSTR) shows a compositional bias: polar residues. Phosphoserine is present on residues Ser125, Ser127, Ser140, and Ser156. The span at 136 to 152 (ERIASLRKPVPEEEPKK) shows a compositional bias: basic and acidic residues. The segment covering 198 to 230 (ATSSGSLARPSSSASTTAITTAPAATMAATNPA) has biased composition (low complexity). A compositionally biased stretch (polar residues) spans 233-243 (VHSSGPPSQAP). The segment covering 245–267 (TLPAAPASTHTTATLSLTHTGPA) has biased composition (low complexity). Ser282, Ser303, and Ser353 each carry phosphoserine. The segment covering 345 to 357 (SEPLLTPSSSPLP) has biased composition (low complexity). A compositionally biased stretch (pro residues) spans 358 to 371 (AHIPPEPPQSPPFP). Ser436 bears the Phosphoserine mark. At Thr441 the chain carries Phosphothreonine. Ser452, Ser462, Ser473, Ser524, Ser526, Ser567, and Ser600 each carry phosphoserine. Positions 507 to 557 (VIPKLPQCLQEEEEGKESDSDSEGPIQYRDEEDEDESHHSALANKVKRKDT) are disordered. Acidic residues predominate over residues 516-528 (QEEEEGKESDSDS). 2 RPEL repeats span residues 593–618 (NTLI…QPKN) and 631–656 (RRLT…RFNE). Positions 602–626 (RPTPEELEQRNILQPKNEADRQAEK) are disordered. Phosphoserine is present on Ser638.

Belongs to the phosphatase and actin regulator family. In terms of assembly, binds PPP1CA and actin.

The protein localises to the cytoplasm. It localises to the cell projection. It is found in the lamellipodium. Regulator of protein phosphatase 1 (PP1) required for neural tube and optic fissure closure, and enteric neural crest cell (ENCCs) migration during development. Acts as an activator of PP1 by interacting with PPP1CA and preventing phosphorylation of PPP1CA at 'Thr-320'. During neural tube closure, localizes to the ventral neural tube and activates PP1, leading to down-regulate cell proliferation within cranial neural tissue and the neural retina. Also acts as a regulator of migration of enteric neural crest cells (ENCCs) by activating PP1, leading to dephosphorylation and subsequent activation of cofilin (COF1 or COF2) and repression of the integrin signaling through the RHO/ROCK pathway. This chain is Phosphatase and actin regulator 4 (PHACTR4), found in Bos taurus (Bovine).